The following is an 87-amino-acid chain: Small ribosomal subunit protein uS17 (87 aa).

The protein belongs to the universal ribosomal protein uS17 family. As to quaternary structure, part of the 30S ribosomal subunit.

One of the primary rRNA binding proteins, it binds specifically to the 5'-end of 16S ribosomal RNA. In Bacillus cereus (strain ATCC 14579 / DSM 31 / CCUG 7414 / JCM 2152 / NBRC 15305 / NCIMB 9373 / NCTC 2599 / NRRL B-3711), this protein is Small ribosomal subunit protein uS17.